A 204-amino-acid polypeptide reads, in one-letter code: Holliday junction branch migration complex subunit RuvA (204 aa).

Residues 1–64 (MIAQLKGSLA…EDAFLLYGFH (64 aa)) form a domain I region. The domain II stretch occupies residues 65–143 (SESQRKVFNL…ALPMAAPTTA (79 aa)). The flexible linker stretch occupies residues 144-154 (IGAATMAANPA). The segment at 154–204 (AGLREEVASALLNLGYKPPQVDAALAKLFSAGEITDISVALKGALKLLAPA) is domain III.

This sequence belongs to the RuvA family. In terms of assembly, homotetramer. Forms an RuvA(8)-RuvB(12)-Holliday junction (HJ) complex. HJ DNA is sandwiched between 2 RuvA tetramers; dsDNA enters through RuvA and exits via RuvB. An RuvB hexamer assembles on each DNA strand where it exits the tetramer. Each RuvB hexamer is contacted by two RuvA subunits (via domain III) on 2 adjacent RuvB subunits; this complex drives branch migration. In the full resolvosome a probable DNA-RuvA(4)-RuvB(12)-RuvC(2) complex forms which resolves the HJ.

The protein localises to the cytoplasm. Its function is as follows. The RuvA-RuvB-RuvC complex processes Holliday junction (HJ) DNA during genetic recombination and DNA repair, while the RuvA-RuvB complex plays an important role in the rescue of blocked DNA replication forks via replication fork reversal (RFR). RuvA specifically binds to HJ cruciform DNA, conferring on it an open structure. The RuvB hexamer acts as an ATP-dependent pump, pulling dsDNA into and through the RuvAB complex. HJ branch migration allows RuvC to scan DNA until it finds its consensus sequence, where it cleaves and resolves the cruciform DNA. This Magnetococcus marinus (strain ATCC BAA-1437 / JCM 17883 / MC-1) protein is Holliday junction branch migration complex subunit RuvA.